Consider the following 212-residue polypeptide: Ribonuclease P protein component 3 (212 aa).

It belongs to the eukaryotic/archaeal RNase P protein component 3 family. In terms of assembly, consists of a catalytic RNA component and at least 5 protein subunits. Forms a heterotetrameric subcomplex with Rnp2. Reconstituted enzyme missing individual protein subunits is suboptimally active, showing each subunit contributes to optimization of activity.

It is found in the cytoplasm. The catalysed reaction is Endonucleolytic cleavage of RNA, removing 5'-extranucleotides from tRNA precursor.. In terms of biological role, part of ribonuclease P, a protein complex that generates mature tRNA molecules by cleaving their 5'-ends. Not absolutely essential for activity in vitro, however it strongly stimulates activity. Binds RNase P RNA. This Pyrococcus horikoshii (strain ATCC 700860 / DSM 12428 / JCM 9974 / NBRC 100139 / OT-3) protein is Ribonuclease P protein component 3.